A 475-amino-acid chain; its full sequence is GDP-fucose protein O-fucosyltransferase 3 (475 aa).

Residues 1–8 (MVRMRRKR) lie on the Cytoplasmic side of the membrane. A helical; Signal-anchor for type II membrane protein membrane pass occupies residues 9 to 29 (LWASCICFAAFFFLLVTLQVI). Topologically, residues 30–475 (TELGNSENKA…QEFWMLVFKQ (446 aa)) are lumenal. N-linked (GlcNAc...) asparagine glycosylation is found at asparagine 107, asparagine 165, and asparagine 315. The cysteines at positions 386 and 389 are disulfide-linked. An N-linked (GlcNAc...) asparagine glycan is attached at asparagine 462.

This sequence belongs to the glycosyltransferase 10 family.

It is found in the endoplasmic reticulum membrane. The enzyme catalyses L-threonyl-[protein] + GDP-beta-L-fucose = 3-O-(alpha-L-fucosyl)-L-threonyl-[protein] + GDP + H(+). The catalysed reaction is L-seryl-[protein] + GDP-beta-L-fucose = 3-O-(alpha-L-fucosyl)-L-seryl-[protein] + GDP + H(+). It participates in protein modification; protein glycosylation. Protein O-fucosyltransferase that specifically catalyzes O-fucosylation of serine or threonine residues in EMI domains of target proteins. Attaches fucose through an O-glycosidic linkage. O-fucosylation of EMI domain-containing proteins may be required for facilitating protein folding and secretion. The chain is GDP-fucose protein O-fucosyltransferase 3 (FUT10) from Gallus gallus (Chicken).